A 170-amino-acid chain; its full sequence is Arginine repressor (170 aa).

It belongs to the ArgR family.

The protein resides in the cytoplasm. The protein operates within amino-acid biosynthesis; L-arginine biosynthesis [regulation]. Its function is as follows. Regulates arginine biosynthesis genes. This chain is Arginine repressor, found in Bifidobacterium longum (strain NCC 2705).